Reading from the N-terminus, the 297-residue chain is Tyrosine recombinase XerD (297 aa).

In terms of domain architecture, Core-binding (CB) spans 1–86 (MKDSALIELF…AMRKLFQYLY (86 aa)). The Tyr recombinase domain occupies 107 to 291 (RLPKYLTEQQ…AKERLKHLHE (185 aa)). Catalysis depends on residues Arg-147, Lys-171, His-243, Arg-246, and His-269. Residue Tyr-278 is the O-(3'-phospho-DNA)-tyrosine intermediate of the active site.

It belongs to the 'phage' integrase family. XerD subfamily. As to quaternary structure, forms a cyclic heterotetrameric complex composed of two molecules of XerC and two molecules of XerD.

It localises to the cytoplasm. Functionally, site-specific tyrosine recombinase, which acts by catalyzing the cutting and rejoining of the recombining DNA molecules. The XerC-XerD complex is essential to convert dimers of the bacterial chromosome into monomers to permit their segregation at cell division. It also contributes to the segregational stability of plasmids. The sequence is that of Tyrosine recombinase XerD from Pasteurella multocida (strain Pm70).